A 174-amino-acid chain; its full sequence is Non-classical export protein 2 homolog 1 (174 aa).

The Cytoplasmic portion of the chain corresponds to 1 to 7 (MLSAADN). Residues 8-28 (LVRIINAVFLIISIGLISGLI) traverse the membrane as a helical segment. The Extracellular portion of the chain corresponds to 29–41 (GTQTKHSSRVNFC). A helical membrane pass occupies residues 42-62 (MFAAVYGLVTDSLYGFLANFW). Topologically, residues 63–69 (TSLTYPA) are cytoplasmic. The chain crosses the membrane as a helical span at residues 70–90 (ILLVLDFLNFIFTFVAATALA). At 91 to 122 (VGIRCHSCKNKTYLEQNKIIQGSSSRCHQSQA) the chain is on the extracellular side. A helical membrane pass occupies residues 123–143 (AVAFFYFSCFLFLIKVTVATM). At 144–174 (GMMQNGGFGSNTGFSRRRARRQMGIPTISQV) the chain is on the cytoplasmic side.

This sequence belongs to the NCE102 family.

Its subcellular location is the cell membrane. Functionally, involved in membrane organization. Required for the formation of membrane compartments of CAN1 (MCCs), localization of CAN1 at the MCCs and subsequent invagination of the plasma membrane at the MCCs sites. Involved in eisosome organization and might act as a sensor of sphingolipids that regulates plasma membrane function. Involved in a novel pathway of export of proteins that lack a cleavable signal sequence. Non-classical export pathway also functions as an alternative clearance/detoxification pathway to eliminate damaged material, when the basic repair pathway is not sufficient. The chain is Non-classical export protein 2 homolog 1 (FHN1) from Saccharomyces cerevisiae (strain ATCC 204508 / S288c) (Baker's yeast).